The following is a 449-amino-acid chain: C4-dicarboxylate transport protein 1 (449 aa).

Transmembrane regions (helical) follow at residues 14–34, 47–67, 83–103, 157–177, 195–215, 226–246, 312–332, 359–379, and 385–405; these read SIFLQVVIGLVIGVICGVGIP, FIKLIKMLIALIVFCVVVNGI, SVIYFEILTTIALVLGLVVAY, ILQVLLFSVLFGSALNLVGEQ, IMGMIVRLAPLGVFGAVAFTT, LGALVLVFYATCLVFVMAVLG, FSIYLTLAVVFIAHVTGTPLA, VILAATLTAVPAIPVAGLVLV, and FMGIGRALTNLIGNCVATVTI.

Belongs to the dicarboxylate/amino acid:cation symporter (DAACS) (TC 2.A.23) family.

The protein resides in the cell inner membrane. Its function is as follows. Responsible for the transport of dicarboxylates such as succinate, fumarate, and malate from the periplasm across the membrane. The sequence is that of C4-dicarboxylate transport protein 1 from Pseudomonas aeruginosa (strain UCBPP-PA14).